Here is a 433-residue protein sequence, read N- to C-terminus: Steroid hormone receptor ERR2 (433 aa).

The segment at 1–38 (MSSEDRHLGSSCGSFIKTEPSSPSSGIDALSHHSPSGS) is disordered. Residues 93 to 211 (YMLNAIPKRL…SPPAKKPLTK (119 aa)) form an interaction with NANOG region. A DNA-binding region (nuclear receptor) is located at residues 100–186 (KRLCLVCGDI…RVRGGRQKYK (87 aa)). 2 NR C4-type zinc fingers span residues 103–123 (CLVC…CEAC) and 139–163 (CPAT…FMKC). Positions 203–433 (PPAKKPLTKI…LFLEMLEAKV (231 aa)) are essential for ESRRB transcriptional activity and interaction with NCOA3. Residues 208-432 (PLTKIVSNLL…KLFLEMLEAK (225 aa)) enclose the NR LBD domain.

The protein belongs to the nuclear hormone receptor family. NR3 subfamily. In terms of assembly, binds DNA as a monomer. Interacts with NR0B1; represses ESRRB activity at the GATA6 promoter. Interacts with NANOG; reciprocally modulates their transcriptional activities and activates POU5F1 expression. Interacts with NCOA3; mediates the interaction between ESRRB and RNA polymerase II complexes and allows NCOA3 corecruitment to ESRRB, KLF4, NANOG, and SOX2 enhancer regions to trigger ESRRB-dependent gene activation involved in self-renewal and pluripotency. Interacts with KDM1A; co-occupes the core set of ESRRB targets including ELF5 and EOMES. Interacts with the multiprotein complex Integrator, at least composed of INTS1, INTS2, INTS3, INTS4, INTS5, INTS6, INTS7, INTS8, INTS9/RC74, INTS10, INTS11/CPSF3L and INTS12; ESRRB is probably not a core component of the integrator complex and associates to integrator via its interaction with INTS1 and INTS9; attracts the transcriptional machinery. Interacts with JARID2. Interacts with POU5F1; recruits ESRRB near the POU5F1-SOX2 element in the NANOG proximal promoter leading to activation of NANOG expression; the interaction is DNA independent. In terms of processing, acetylated by PCAF/KAT2 (in vitro). Highly expressed in undifferentiated ESCs. Expressed in immature horizontal cells and in rod photoreceptors at intermediate and late stages of differentiation. Expressed in endolymph-producing epithelial cells.

It localises to the nucleus. It is found in the cytoplasm. Its subcellular location is the chromosome. In terms of biological role, transcription factor that binds a canonical ESRRB recognition (ERRE) sequence 5'TCAAGGTCA-3' localized on promoter and enhancer of targets genes regulating their expression or their transcriptional activity. Plays a role, in a LIF-independent manner, in maintainance of self-renewal and pluripotency of embryonic and trophoblast stem cells through different signaling pathways including FGF signaling pathway and Wnt signaling pathways. Involved in morula development (2-16 cells embryos) by acting as a regulator at the 8-cell stage. Upon FGF signaling pathway activation, interacts with KDM1A by directly binding to enhancer site of ELF5 and EOMES and activating their transcription leading to self-renewal of trophoblast stem cells. Also regulates expression of multiple rod-specific genes and is required for survival of this cell type. Plays a role as transcription factor activator of GATA6, NR0B1, POU5F1 and PERM1. Plays a role as transcription factor repressor of NFE2L2 transcriptional activity and ESR1 transcriptional activity. During mitosis remains bound to a subset of interphase target genes, including pluripotency regulators, through the canonical ESRRB recognition (ERRE) sequence, leading to their transcriptional activation in early G1 phase. Can coassemble on structured DNA elements with other transcription factors like SOX2, POU5F1, KDM1A and NCOA3 to trigger ESRRB-dependent gene activation. This mechanism, in the case of SOX2 corecruitment prevents the embryonic stem cells (ESCs) to epiblast stem cells (EpiSC) transition through positive regulation of NR0B1 that inhibits the EpiSC transcriptional program. Also plays a role inner ear development by controlling expression of ion channels and transporters and in early placentation. This Mus musculus (Mouse) protein is Steroid hormone receptor ERR2.